An 80-amino-acid chain; its full sequence is Small ribosomal subunit protein bS18 (80 aa).

This sequence belongs to the bacterial ribosomal protein bS18 family. In terms of assembly, part of the 30S ribosomal subunit. Forms a tight heterodimer with protein bS6.

Binds as a heterodimer with protein bS6 to the central domain of the 16S rRNA, where it helps stabilize the platform of the 30S subunit. This is Small ribosomal subunit protein bS18 from Clostridium perfringens (strain ATCC 13124 / DSM 756 / JCM 1290 / NCIMB 6125 / NCTC 8237 / Type A).